The chain runs to 885 residues: Dipeptidyl peptidase 9 (885 aa).

Residues Ser-752, Asp-830, and His-862 each act as charge relay system in the active site. Ser-752 lines the Val-boroPro pocket.

Belongs to the peptidase S9B family. DPPIV subfamily. As to quaternary structure, homodimer. Forms a ternary complex with NLRP1, composed of a DPP9 homodimer, one full-length NLRP1 protein, and one cleaved C-terminus of NLRP1 (NACHT, LRR and PYD domains-containing protein 1, C-terminus).

Its subcellular location is the nucleus. It carries out the reaction Release of an N-terminal dipeptide, Xaa-Yaa-|-Zaa-, from a polypeptide, preferentially when Yaa is Pro, provided Zaa is neither Pro nor hydroxyproline.. Functionally, dipeptidyl peptidase that cleaves off N-terminal dipeptides from proteins having a Pro or Ala residue at position 2. Acts as a key inhibitor of the NLRP1 inflammasome. This is Dipeptidyl peptidase 9 from Danio rerio (Zebrafish).